Consider the following 129-residue polypeptide: Transcriptional activator protein (129 aa).

The segment covering 1–12 (MRSSSPSQPPSI) has biased composition (low complexity). Positions 1 to 21 (MRSSSPSQPPSIKKAHRQAKR) are disordered. The Nuclear localization signal signature appears at 13–28 (KKAHRQAKRRAIRRRR). A zinc finger spans residues 33–50 (CGCSIYFHIDCTGHGFTH). The segment at 84–114 (IHQNEDIPCTNTVQPQPEESVASPQSLPELP) is disordered. Polar residues predominate over residues 92-109 (CTNTVQPQPEESVASPQS). Residues 115–129 (SLDDFDDSFWVNLFK) are transactivation.

This sequence belongs to the geminiviridae transcriptional activator protein family. Monomer. Homodimer. Homooligomer. Self-interaction correlates with nuclear localization and efficient activation of transcription. Monomers suppress local silencing by interacting with and inactivating host adenosine kinase 2 (ADK2) in the cytoplasm. Interacts with and inhibits host SNF1 kinase. Binds to ssDNA. Post-translationally, phosphorylated.

It localises to the host nucleus. The protein localises to the host cytoplasm. Strong activator of the late viral genes promoters. Enhances the expression of the capsid protein and nuclear shuttle protein. Acts as a suppressor of RNA-mediated gene silencing, also known as post-transcriptional gene silencing (PTGS), a mechanism of plant viral defense that limits the accumulation of viral RNAs. Suppresses the host RNA silencing by inhibiting adenosine kinase 2 (ADK2), a kinase involved in a general methylation pathway. Also suppresses the host basal defense by interacting with and inhibiting SNF1 kinase, a key regulator of cell metabolism implicated in innate antiviral defense. Determines pathogenicity. The chain is Transcriptional activator protein from Abutilon (Upland cotton).